A 154-amino-acid polypeptide reads, in one-letter code: CASP-like protein 5B2 (154 aa).

Over 1–17 (MAGLAGRPGSWGGLVLR) the chain is Cytoplasmic. Residues 18-38 (VGQALFAAACIGVMGSSLGFA) form a helical membrane-spanning segment. Residues 39–42 (SYTA) lie on the Extracellular side of the membrane. Residues 43–63 (FCYLIASMGLQMLWSFGLACL) form a helical membrane-spanning segment. At 64 to 87 (DGYAIRANKDLTSPILLSLFVVGD) the chain is on the cytoplasmic side. Residues 88–107 (WVTAILSFAASSSAAGVVIL) form a helical membrane-spanning segment. The Extracellular portion of the chain corresponds to 108–130 (FQKDVLFCRRYPQLPCGKYELAT). A helical membrane pass occupies residues 131–151 (AFAFLSWALSATSALIMFWLL). Over 152–154 (AAF) the chain is Cytoplasmic.

This sequence belongs to the Casparian strip membrane proteins (CASP) family. As to quaternary structure, homodimer and heterodimers.

It is found in the cell membrane. In Zea mays (Maize), this protein is CASP-like protein 5B2.